The primary structure comprises 183 residues: MKLIVVAALIGVCAGGALPGHVAPQYYYGGPGYYPHGRPSPGVERNAAILRSDSEVTSQGFQYVYDTENGIHGEAAGVEANGIQSQGAFSYTGDDGQQYAVKYTADANGFQAQGAHLPTPPPIPDAIVRSIEENARAEAAGVYNEGSYNVYNNQAAFANRHQYPYQYQSNRPYNTLGYHGYKY.

The N-terminal stretch at 1 to 15 (MKLIVVAALIGVCAG) is a signal peptide. Residues 58–121 (SQGFQYVYDT…AQGAHLPTPP (64 aa)) form the Chitin-binding type R&amp;R domain.

This is Cuticle protein 2 from Lonomia obliqua (Moth).